Here is a 284-residue protein sequence, read N- to C-terminus: Protein SIC1 (284 aa).

The interval 1 to 89 (MTPSTPPRSR…SPFPKSSVKR (89 aa)) is disordered. At T5 the chain carries Phosphothreonine; by PHO85. Polar residues-rich tracts occupy residues 18–52 (PSGN…TKSF) and 61–79 (PNSN…SPQR). Phosphothreonine is present on T33. S76 is modified (phosphoserine). At T173 the chain carries Phosphothreonine. 2 positions are modified to phosphoserine: S198 and S201. A lysine derivative mark is found at K268, K272, and K274.

As to quaternary structure, interacts with HOG1. Phosphorylated by cyclin-dependent kinases CDC28 and PHO85 in association with G1-cyclins, promoting degradation of SIC1 and exit form G1. In terms of processing, may contain a covalently attached chromophore. Post-translationally, the N-terminus is blocked.

It is found in the cytoplasm. The protein resides in the nucleus. Substrate and inhibitor of the cyclin-dependent protein kinase CDC28. Its activity could be important for faithful segregation of chromosomes to daughter cells. It acts in response to a signal from a post-start checkpoint. In Saccharomyces cerevisiae (strain ATCC 204508 / S288c) (Baker's yeast), this protein is Protein SIC1 (SIC1).